Here is an 876-residue protein sequence, read N- to C-terminus: Alanine--tRNA ligase (876 aa).

Lys-74 carries the post-translational modification N6-acetyllysine. His-564, His-568, Cys-666, and His-670 together coordinate Zn(2+).

Belongs to the class-II aminoacyl-tRNA synthetase family. As to quaternary structure, homotetramer. Zn(2+) serves as cofactor.

The protein resides in the cytoplasm. The enzyme catalyses tRNA(Ala) + L-alanine + ATP = L-alanyl-tRNA(Ala) + AMP + diphosphate. Catalyzes the attachment of alanine to tRNA(Ala) in a two-step reaction: alanine is first activated by ATP to form Ala-AMP and then transferred to the acceptor end of tRNA(Ala). Also edits incorrectly charged Ser-tRNA(Ala) and Gly-tRNA(Ala) via its editing domain. The protein is Alanine--tRNA ligase of Shigella sonnei (strain Ss046).